The sequence spans 419 residues: UDP-N-acetylglucosamine 1-carboxyvinyltransferase (419 aa).

Residue 22-23 participates in phosphoenolpyruvate binding; that stretch reads KN. Position 92 (Arg-92) interacts with UDP-N-acetyl-alpha-D-glucosamine. Cys-116 serves as the catalytic Proton donor. The residue at position 116 (Cys-116) is a 2-(S-cysteinyl)pyruvic acid O-phosphothioketal. Residues 121-125, Asp-306, and Ile-328 contribute to the UDP-N-acetyl-alpha-D-glucosamine site; that span reads RPIDL.

This sequence belongs to the EPSP synthase family. MurA subfamily.

The protein resides in the cytoplasm. The catalysed reaction is phosphoenolpyruvate + UDP-N-acetyl-alpha-D-glucosamine = UDP-N-acetyl-3-O-(1-carboxyvinyl)-alpha-D-glucosamine + phosphate. It functions in the pathway cell wall biogenesis; peptidoglycan biosynthesis. In terms of biological role, cell wall formation. Adds enolpyruvyl to UDP-N-acetylglucosamine. Target for the antibiotic fosfomycin. Involved in heteroresistance to antibiotic fosfomycin. Heteroresistance is the ability of a clonal population to grow one or several subpopulations at a frequency of 10(-7) to 10(-3) in the presence of a higher antibiotic concentration than that predicted to be effective by measurement of the minimum inhibitory concentration (MIC). This is UDP-N-acetylglucosamine 1-carboxyvinyltransferase from Streptococcus pneumoniae serotype 2 (strain D39 / NCTC 7466).